The following is a 447-amino-acid chain: ATP-dependent protease ATPase subunit HslU (447 aa).

ATP contacts are provided by residues isoleucine 18, 60–65 (GVGKTE), aspartate 259, glutamate 325, and arginine 397.

The protein belongs to the ClpX chaperone family. HslU subfamily. In terms of assembly, a double ring-shaped homohexamer of HslV is capped on each side by a ring-shaped HslU homohexamer. The assembly of the HslU/HslV complex is dependent on binding of ATP.

The protein resides in the cytoplasm. Its function is as follows. ATPase subunit of a proteasome-like degradation complex; this subunit has chaperone activity. The binding of ATP and its subsequent hydrolysis by HslU are essential for unfolding of protein substrates subsequently hydrolyzed by HslV. HslU recognizes the N-terminal part of its protein substrates and unfolds these before they are guided to HslV for hydrolysis. The sequence is that of ATP-dependent protease ATPase subunit HslU from Burkholderia ambifaria (strain ATCC BAA-244 / DSM 16087 / CCUG 44356 / LMG 19182 / AMMD) (Burkholderia cepacia (strain AMMD)).